The primary structure comprises 264 residues: 3-methyl-2-oxobutanoate hydroxymethyltransferase (264 aa).

2 residues coordinate Mg(2+): Asp-45 and Asp-84. Residues 45–46 (DS), Asp-84, and Lys-112 contribute to the 3-methyl-2-oxobutanoate site. A Mg(2+)-binding site is contributed by Glu-114. Glu-181 acts as the Proton acceptor in catalysis.

This sequence belongs to the PanB family. Homodecamer; pentamer of dimers. The cofactor is Mg(2+).

It localises to the cytoplasm. The enzyme catalyses 3-methyl-2-oxobutanoate + (6R)-5,10-methylene-5,6,7,8-tetrahydrofolate + H2O = 2-dehydropantoate + (6S)-5,6,7,8-tetrahydrofolate. It participates in cofactor biosynthesis; (R)-pantothenate biosynthesis; (R)-pantoate from 3-methyl-2-oxobutanoate: step 1/2. Its function is as follows. Catalyzes the reversible reaction in which hydroxymethyl group from 5,10-methylenetetrahydrofolate is transferred onto alpha-ketoisovalerate to form ketopantoate. This Shewanella halifaxensis (strain HAW-EB4) protein is 3-methyl-2-oxobutanoate hydroxymethyltransferase.